A 1109-amino-acid chain; its full sequence is Ankyrin repeat- and BTB/POZ domain-containing protein 3 (1109 aa).

A helical transmembrane segment spans residues 168–188 (IVLSWGLAAHCTAAALAALSL). Positions 260–302 (SCSGPGPGSSSGSGPGPGSGPGAPAADKERETPGGGAASGGPC) are disordered. Residues 264–280 (PGPGSSSGSGPGPGSGP) show a composition bias toward gly residues. ANK repeat units follow at residues 608 to 637 (QGMT…DLNV), 654 to 683 (RHWT…KVEG), 692 to 721 (YSET…DPLI), 735 to 764 (GDMN…KEKS), and 830 to 859 (TWLE…TIQE). Residues 928–994 (SDVTFLVEGR…LYYGGPESLL (67 aa)) enclose the BTB domain.

The protein localises to the membrane. The chain is Ankyrin repeat- and BTB/POZ domain-containing protein 3 (Abtb3) from Mus musculus (Mouse).